We begin with the raw amino-acid sequence, 521 residues long: Protein disulfide-isomerase A5 (521 aa).

Positions 1–25 (MARVVPAWLLLPLAVWVVLPTWLSS) are cleaved as a signal peptide. Thioredoxin domains lie at 136–263 (FLKD…NPQP), 274–386 (ADEG…NPES), and 387–508 (PPPP…TLRE). 3 disulfide bridges follow: Cys184–Cys187, Cys307–Cys310, and Cys428–Cys431. The Prevents secretion from ER signature appears at 518 to 521 (KEEL).

Belongs to the protein disulfide isomerase family.

It localises to the endoplasmic reticulum lumen. The enzyme catalyses Catalyzes the rearrangement of -S-S- bonds in proteins.. In Bos taurus (Bovine), this protein is Protein disulfide-isomerase A5 (PDIA5).